The primary structure comprises 83 residues: Cytochrome b559 subunit alpha (83 aa).

A helical membrane pass occupies residues 21 to 35 (VIHSITIPSLFIAGW). Histidine 23 contacts heme.

The protein belongs to the PsbE/PsbF family. In terms of assembly, heterodimer of an alpha subunit and a beta subunit. PSII is composed of 1 copy each of membrane proteins PsbA, PsbB, PsbC, PsbD, PsbE, PsbF, PsbH, PsbI, PsbJ, PsbK, PsbL, PsbM, PsbT, PsbX, PsbY, PsbZ, Psb30/Ycf12, at least 3 peripheral proteins of the oxygen-evolving complex and a large number of cofactors. It forms dimeric complexes. The cofactor is heme b.

The protein resides in the plastid. It is found in the chloroplast thylakoid membrane. Functionally, this b-type cytochrome is tightly associated with the reaction center of photosystem II (PSII). PSII is a light-driven water:plastoquinone oxidoreductase that uses light energy to abstract electrons from H(2)O, generating O(2) and a proton gradient subsequently used for ATP formation. It consists of a core antenna complex that captures photons, and an electron transfer chain that converts photonic excitation into a charge separation. This chain is Cytochrome b559 subunit alpha, found in Mesembryanthemum crystallinum (Common ice plant).